A 473-amino-acid polypeptide reads, in one-letter code: Histone-lysine N-methyltransferase ATXR2 (473 aa).

In terms of domain architecture, SET spans 33-441 (KLITSRRCNG…KNEEVTISYI (409 aa)). Residues 134–203 (EEQCGGSSSS…DWESSHSLLC (70 aa)) form an MYND-type; degenerate zinc finger. Residues cysteine 176, cysteine 180, histidine 199, and cysteine 203 each coordinate Zn(2+). Tyrosine 440 serves as a coordination point for S-adenosyl-L-methionine.

It belongs to the class V-like SAM-binding methyltransferase superfamily. Histone-lysine methyltransferase family. TRX/MLL subfamily. Interacts with JMJ30. Binds to ARF7 and ARF19 in the nucleus.

Its subcellular location is the nucleus. The catalysed reaction is L-lysyl-[histone] + S-adenosyl-L-methionine = N(6)-methyl-L-lysyl-[histone] + S-adenosyl-L-homocysteine + H(+). Histone methyltransferase that methylates 'Lys-36' (H3K36me) of histone H3 to produce H3K36me3. Promotes early stages of cellular dedifferentiation through H3K36me3-dependent, and to a lesser degree H3K4me3-dependent, activation of Lateral organ Boundaries-Domain (LBD) (e.g. LBD16 and LBD29) genes. Positive regulator of root organogenesis including lateral root formation as well as adventitious root formation from wounded leaf tissues. Recruited by JMJ30/ARF (e.g. ARF7 and ARF19) complexes to promote the deposition of H3K36me3 and, to a lower extent, H3K4me3 at LBD genes promoters, thus ensuring their stable activation during callus formation on callus-inducing medium (CIM). The sequence is that of Histone-lysine N-methyltransferase ATXR2 from Arabidopsis thaliana (Mouse-ear cress).